The following is a 332-amino-acid chain: Transaldolase (332 aa).

The active-site Schiff-base intermediate with substrate is Lys135.

Belongs to the transaldolase family. Type 1 subfamily. As to quaternary structure, homodimer.

It localises to the cytoplasm. The enzyme catalyses D-sedoheptulose 7-phosphate + D-glyceraldehyde 3-phosphate = D-erythrose 4-phosphate + beta-D-fructose 6-phosphate. Its pathway is carbohydrate degradation; pentose phosphate pathway; D-glyceraldehyde 3-phosphate and beta-D-fructose 6-phosphate from D-ribose 5-phosphate and D-xylulose 5-phosphate (non-oxidative stage): step 2/3. Its function is as follows. Transaldolase is important for the balance of metabolites in the pentose-phosphate pathway. The sequence is that of Transaldolase from Prochlorococcus marinus (strain NATL2A).